A 203-amino-acid chain; its full sequence is Recombination protein RecR (203 aa).

Residues 56-71 (CTVCGNVSDDERCRIC) form a C4-type zinc finger. The 101-residue stretch at 79 to 179 (SVVCVVEEPK…TVTRIASGLP (101 aa)) folds into the Toprim domain.

Belongs to the RecR family.

Its function is as follows. May play a role in DNA repair. It seems to be involved in an RecBC-independent recombinational process of DNA repair. It may act with RecF and RecO. The protein is Recombination protein RecR of Mycobacterium leprae (strain TN).